A 102-amino-acid polypeptide reads, in one-letter code: uncharacterized protein (102 aa).

Transmembrane regions (helical) follow at residues 1–21 (MVPLILLILLFSKFSTFLRPV), 42–62 (SIIDVTYTMHVFYMTIILILV), and 68–88 (SIHAFLGSLCLPSHVLDFSIV).

The protein resides in the membrane. This is an uncharacterized protein from Saccharomyces cerevisiae (strain ATCC 204508 / S288c) (Baker's yeast).